Here is a 550-residue protein sequence, read N- to C-terminus: MTPADLAELLKATAAAVLTEHDLDVAALPATVTVERPRNPEHGDYATNLALQLGKKVGVNPRELAGWLATALTAADGIAVAEVAGPGFVNLRIEASAQGVIITNVLAAEGSYGSSDQYAGRNVNLEFVSANPTGPIHIGGTRWAAVGDALGRLLATQGAAVTREYYFNDHGAQIDRFVNSLIASAKGEPTPEDGYAGDYIVDIAQQVIAKAPDVLGLPEDQQRETFRAIGVDLMFTHIKQSLHDFGTDFDVYTHEDSMHTSGRVDQAITQLREAGSIYEKDGAVWLRTTDFGDDKDRVVIKSDGNAAYIAGDLAYYLDKRKRGFDLCIYMLGADHHGYIARLKAAAAALGDDPDTVEVLIGQMVNLVRDGQPVRMSKRAGTVITLDDLVEAIGVDAARYALIRSSVDTPIDIDLELWSSASNENPVYYVQYAHARLCALARNAADLGVSVNTDHLDLLTHEKEGALIRNLGEFPRVLKTAASLREPHRVCRYLEDLAGDYHRFYDSCRVLPQGDEEPGDLHSARLALCRATRQVIANGLAILGVSAPERM.

Residues Ala-130–Gly-140 carry the 'HIGH' region motif.

This sequence belongs to the class-I aminoacyl-tRNA synthetase family. Monomer.

It is found in the cytoplasm. It carries out the reaction tRNA(Arg) + L-arginine + ATP = L-arginyl-tRNA(Arg) + AMP + diphosphate. The sequence is that of Arginine--tRNA ligase (argS) from Mycolicibacterium smegmatis (strain ATCC 700084 / mc(2)155) (Mycobacterium smegmatis).